Consider the following 81-residue polypeptide: ATP synthase subunit c (81 aa).

2 helical membrane-spanning segments follow: residues 5–25 (IAAG…IGAG) and 57–77 (VGLV…FVFA).

The protein belongs to the ATPase C chain family. As to quaternary structure, F-type ATPases have 2 components, F(1) - the catalytic core - and F(0) - the membrane proton channel. F(1) has five subunits: alpha(3), beta(3), gamma(1), delta(1), epsilon(1). F(0) has three main subunits: a(1), b(2) and c(10-14). The alpha and beta chains form an alternating ring which encloses part of the gamma chain. F(1) is attached to F(0) by a central stalk formed by the gamma and epsilon chains, while a peripheral stalk is formed by the delta and b chains.

The protein localises to the cell membrane. Its function is as follows. F(1)F(0) ATP synthase produces ATP from ADP in the presence of a proton or sodium gradient. F-type ATPases consist of two structural domains, F(1) containing the extramembraneous catalytic core and F(0) containing the membrane proton channel, linked together by a central stalk and a peripheral stalk. During catalysis, ATP synthesis in the catalytic domain of F(1) is coupled via a rotary mechanism of the central stalk subunits to proton translocation. In terms of biological role, key component of the F(0) channel; it plays a direct role in translocation across the membrane. A homomeric c-ring of between 10-14 subunits forms the central stalk rotor element with the F(1) delta and epsilon subunits. The polypeptide is ATP synthase subunit c (Mycobacterium marinum (strain ATCC BAA-535 / M)).